The primary structure comprises 144 residues: 3-dehydroquinate dehydratase (144 aa).

The active-site Proton acceptor is the tyrosine 22. The substrate site is built by asparagine 73, histidine 79, and aspartate 86. The active-site Proton donor is the histidine 99. Substrate-binding positions include 100 to 101 (LS) and arginine 110.

This sequence belongs to the type-II 3-dehydroquinase family. Homododecamer.

It carries out the reaction 3-dehydroquinate = 3-dehydroshikimate + H2O. Its pathway is metabolic intermediate biosynthesis; chorismate biosynthesis; chorismate from D-erythrose 4-phosphate and phosphoenolpyruvate: step 3/7. Functionally, catalyzes a trans-dehydration via an enolate intermediate. This chain is 3-dehydroquinate dehydratase, found in Herpetosiphon aurantiacus (strain ATCC 23779 / DSM 785 / 114-95).